A 362-amino-acid polypeptide reads, in one-letter code: RING finger protein 32 (362 aa).

The segment at 127 to 169 (CPICKEEFELRPQVLLSCSHVFHKACLQAFEKFTNKKTCPLCR) adopts an RING-type 1; atypical zinc-finger fold. The 30-residue stretch at 186–215 (RIKCVTRIQAYWRGCVVRKWYRNLRKTVPP) folds into the IQ domain. The RING-type 2; atypical zinc-finger motif lies at 293–352 (CSICLAPLSAAGGQRVGAGRRSREMALLSCSHVFHHACLLALEEFSVGDRPPFHACPLCR).

Highly expressed in testis, less abundant in ovary.

The protein localises to the cytoplasm. Functionally, may play a role in sperm formation. The protein is RING finger protein 32 (RNF32) of Homo sapiens (Human).